We begin with the raw amino-acid sequence, 155 residues long: SsrA-binding protein (155 aa).

Belongs to the SmpB family.

The protein resides in the cytoplasm. In terms of biological role, required for rescue of stalled ribosomes mediated by trans-translation. Binds to transfer-messenger RNA (tmRNA), required for stable association of tmRNA with ribosomes. tmRNA and SmpB together mimic tRNA shape, replacing the anticodon stem-loop with SmpB. tmRNA is encoded by the ssrA gene; the 2 termini fold to resemble tRNA(Ala) and it encodes a 'tag peptide', a short internal open reading frame. During trans-translation Ala-aminoacylated tmRNA acts like a tRNA, entering the A-site of stalled ribosomes, displacing the stalled mRNA. The ribosome then switches to translate the ORF on the tmRNA; the nascent peptide is terminated with the 'tag peptide' encoded by the tmRNA and targeted for degradation. The ribosome is freed to recommence translation, which seems to be the essential function of trans-translation. This Clostridium acetobutylicum (strain ATCC 824 / DSM 792 / JCM 1419 / IAM 19013 / LMG 5710 / NBRC 13948 / NRRL B-527 / VKM B-1787 / 2291 / W) protein is SsrA-binding protein.